The chain runs to 314 residues: Formate-nitrite transporter (314 aa).

At 1–47 (MSKGKSKYVIDPISVKTACTSEESYIRCVEYGKGKAHYPNLSLLAKA) the chain is on the cytoplasmic side. A helical transmembrane segment spans residues 48–68 (ILAGVFVGVCAHASGIAGGHF). At 69–78 (YYHKLREYVG) the chain is on the extracellular side. Residues 79–99 (ISMSAFVYGFTFPIAFLCIIA) traverse the membrane as a helical segment. Residues 100–128 (TGSDLFTGNTLAVTTALLQRKVSLLQYLR) are Cytoplasmic-facing. A helical membrane pass occupies residues 129-149 (VMSISLFGNYLGAVSFAFFVS). Over 150–185 (HLSGAYEKHTDVTKNHIFQFLNDIAEKKISHTFIQC) the chain is Extracellular. Residues 186–206 (ICLAIGCNIFVCLAVYFVLTI) traverse the membrane as a helical segment. The Cytoplasmic segment spans residues 207-211 (KDGSG). Residues 212-232 (MVFSVFFAVYAFAIAGYEHII) form a helical membrane-spanning segment. Residues 233-257 (ANMYTLNLALMVEAKVTWSKVYFHN) are Extracellular-facing. The helical transmembrane segment at 258–278 (LLPTLIGNYIAGALVLACPLF) threads the bilayer. The Cytoplasmic segment spans residues 279–314 (YIYRNSYRDYERTRGDGSNCGLRSLSIEMQNGSNGN).

Belongs to the FNT transporter (TC 1.A.16) family. In terms of assembly, homopentamer.

The protein resides in the cell membrane. It is found in the vacuole membrane. It carries out the reaction (S)-lactate(in) + H(+)(in) = (S)-lactate(out) + H(+)(out). It catalyses the reaction formate(in) + H(+)(in) = formate(out) + H(+)(out). The catalysed reaction is pyruvate(out) + H(+)(out) = pyruvate(in) + H(+)(in). The enzyme catalyses acetate(out) + H(+)(out) = acetate(in) + H(+)(in). Its activity is regulated as follows. Inhibited by the Malaria Box compound MMV007839 and its derivatives BH296 and BH267.meta. Its function is as follows. Monocarboxylate-proton symporter that mediates the efflux of the waste product lactate in the intraerythrocytic parasites; active in acidic-to-neutral pH range. Transports L-lactate. The chain is Formate-nitrite transporter from Plasmodium knowlesi (strain H).